Consider the following 184-residue polypeptide: Transcription termination/antitermination protein NusG (184 aa).

A KOW domain is found at 133–163 (EGDQVRVVSGPFADFTGTVTEINPERGKVKV).

Belongs to the NusG family.

Participates in transcription elongation, termination and antitermination. This Thermus thermophilus (strain ATCC 27634 / DSM 579 / HB8) protein is Transcription termination/antitermination protein NusG.